The sequence spans 3027 residues: DmX-like protein 1 (3027 aa).

WD repeat units lie at residues 108–145, 166–206, and 229–277; these read FLES…KPTE, KTAS…RTAV, and AHPR…NDCL. S324, S422, S425, and S436 each carry phosphoserine. Residues 420-433 show a composition bias toward polar residues; that stretch reads PSSEASVEDSNQAD. The interval 420–450 is disordered; the sequence is PSSEASVEDSNQADVKSDEETDDGVDDLKIN. One copy of the WD 4 repeat lies at 476 to 516; sequence DHQIEVLLSEWSKNADMLFSIHPMDGSLLVWHVDWLDEYQP. The interval 563 to 584 is disordered; the sequence is KQKPSGLTRSTSMLISSGHNKS. A Phosphoserine modification is found at S574. WD repeat units follow at residues 580-621, 628-665, and 848-895; these read GHNK…ESAF, SHKS…RTPD, and GKDS…IPVS. Residues S918 and S924 each carry the phosphoserine modification. WD repeat units lie at residues 968-1010, 1134-1175, and 1211-1251; these read PSAG…GESA, SNTK…VQDQ, and GSPP…EPVI. S1830, S1896, S1908, and S1970 each carry phosphoserine. Disordered regions lie at residues 2367–2412 and 2446–2468; these read PSKE…SSAP and SRAE…DDDD. Acidic residues predominate over residues 2451-2468; it reads DSEESLGSDDDDNDDDDD. 6 WD repeats span residues 2742 to 2783, 2785 to 2824, 2836 to 2878, 2884 to 2923, 2926 to 2965, and 2978 to 3016; these read KAIN…TCFR, GGNS…CPVT, CHNK…ANSL, CHDS…QRQL, SHDS…LLHT, and NIGT…SPLN.

As to expression, expressed in bone, breast, eye, foreskin, heart, parathyroid, small intestine, testis, tonsils, placenta and uterus.

The chain is DmX-like protein 1 (DMXL1) from Homo sapiens (Human).